The following is a 452-amino-acid chain: Plasmepsin I (452 aa).

Topologically, residues 1–37 are cytoplasmic; that stretch reads MALSIKEDFSSAFAKNESAVNSSTFNNNMKTWKIQKR. A propeptide spanning residues 1-123 is cleaved from the precursor; the sequence is MALSIKEDFS…TGLTQKPHLG (123 aa). A helical; Signal-anchor for type II membrane protein transmembrane segment spans residues 38 to 58; the sequence is FQILYVFFFLLITGALFYYLI. The Lumenal segment spans residues 59–452; it reads DNVLFPKNKK…VGFALAKKKL (394 aa). One can recognise a Peptidase A1 domain in the interval 139 to 446; it reads YYGEAQIGDN…DYDNHTVGFA (308 aa). Residue aspartate 157 is part of the active site. A disulfide bond links cysteine 170 and cysteine 175. Aspartate 337 is a catalytic residue. Cysteine 372 and cysteine 408 are disulfide-bonded.

This sequence belongs to the peptidase A1 family. Post-translationally, not N-glycosylated. Proteolytically cleaved into the soluble active mature form in the digestive vacuole by cysteine protease falcipains; the process begins at the early ring stage. Proteolysis requires an acidic environment.

It localises to the membrane. The protein localises to the vacuole lumen. Its subcellular location is the vacuole membrane. It carries out the reaction Hydrolysis of the 33-Phe-|-Leu-34 bond in the alpha-chain of hemoglobin, leading to denaturation of molecule.. Its activity is regulated as follows. Inhibited by KNI derived compounds KNI-10333 and to a lesser extent KNI-10743. In terms of biological role, during the asexual blood stage, catalyzes the initial cleavage of native host hemoglobin (Hb) resulting in Hb denaturation; specifically cleaves between Phe-33 and Leu-34 of Hb alpha-chain. Digestion of host Hb is an essential step which provides the parasite with amino acids for protein synthesis, and regulates osmolarity. This Plasmodium falciparum (isolate 3D7) protein is Plasmepsin I.